Reading from the N-terminus, the 272-residue chain is 2-dehydro-3-deoxyphosphooctonate aldolase (272 aa).

It belongs to the KdsA family.

The protein localises to the cytoplasm. The enzyme catalyses D-arabinose 5-phosphate + phosphoenolpyruvate + H2O = 3-deoxy-alpha-D-manno-2-octulosonate-8-phosphate + phosphate. Its pathway is carbohydrate biosynthesis; 3-deoxy-D-manno-octulosonate biosynthesis; 3-deoxy-D-manno-octulosonate from D-ribulose 5-phosphate: step 2/3. It participates in bacterial outer membrane biogenesis; lipopolysaccharide biosynthesis. This chain is 2-dehydro-3-deoxyphosphooctonate aldolase, found in Geobacter sulfurreducens (strain ATCC 51573 / DSM 12127 / PCA).